A 346-amino-acid chain; its full sequence is Aspartate-semialdehyde dehydrogenase (346 aa).

NADP(+)-binding positions include 10-13 and 38-39; these read TGQG and RS. R98 is a binding site for phosphate. C131 acts as the Acyl-thioester intermediate in catalysis. Q158 is a binding site for substrate. Residue 161–162 participates in NADP(+) binding; the sequence is SG. K228 serves as a coordination point for phosphate. R250 contacts substrate. The active-site Proton acceptor is the H257. N326 serves as a coordination point for NADP(+).

It belongs to the aspartate-semialdehyde dehydrogenase family. As to quaternary structure, homodimer.

It carries out the reaction L-aspartate 4-semialdehyde + phosphate + NADP(+) = 4-phospho-L-aspartate + NADPH + H(+). It functions in the pathway amino-acid biosynthesis; L-lysine biosynthesis via DAP pathway; (S)-tetrahydrodipicolinate from L-aspartate: step 2/4. The protein operates within amino-acid biosynthesis; L-methionine biosynthesis via de novo pathway; L-homoserine from L-aspartate: step 2/3. It participates in amino-acid biosynthesis; L-threonine biosynthesis; L-threonine from L-aspartate: step 2/5. In terms of biological role, catalyzes the NADPH-dependent formation of L-aspartate-semialdehyde (L-ASA) by the reductive dephosphorylation of L-aspartyl-4-phosphate. This Mycolicibacterium smegmatis (Mycobacterium smegmatis) protein is Aspartate-semialdehyde dehydrogenase.